Here is a 126-residue protein sequence, read N- to C-terminus: Alpha-lactalbumin (126 aa).

Residues 1 to 126 form the C-type lysozyme domain; the sequence is KVFEKCELSQ…CIADLDQWKC (126 aa). 4 disulfides stabilise this stretch: Cys6/Cys126, Cys30/Cys117, Cys63/Cys82, and Cys78/Cys96. Asn47 carries N-linked (GlcNAc...) asparagine glycosylation. Residues Lys84, Asp87, Asp89, Asp92, and Asp93 each contribute to the Ca(2+) site.

This sequence belongs to the glycosyl hydrolase 22 family. Lactose synthase (LS) is a heterodimer of a catalytic component, beta1,4-galactosyltransferase (beta4Gal-T1) and a regulatory component, alpha-lactalbumin (LA). Mammary gland specific. Secreted in milk.

Its subcellular location is the secreted. Its function is as follows. Regulatory subunit of lactose synthase, changes the substrate specificity of galactosyltransferase in the mammary gland making glucose a good acceptor substrate for this enzyme. This enables LS to synthesize lactose, the major carbohydrate component of milk. In other tissues, galactosyltransferase transfers galactose onto the N-acetylglucosamine of the oligosaccharide chains in glycoproteins. In Tachyglossus aculeatus aculeatus (Southeast Australian short-beaked echidna), this protein is Alpha-lactalbumin (LALBA).